The chain runs to 252 residues: Imidazole glycerol phosphate synthase subunit HisF (252 aa).

Catalysis depends on residues aspartate 11 and aspartate 130.

It belongs to the HisA/HisF family. In terms of assembly, heterodimer of HisH and HisF.

It localises to the cytoplasm. It carries out the reaction 5-[(5-phospho-1-deoxy-D-ribulos-1-ylimino)methylamino]-1-(5-phospho-beta-D-ribosyl)imidazole-4-carboxamide + L-glutamine = D-erythro-1-(imidazol-4-yl)glycerol 3-phosphate + 5-amino-1-(5-phospho-beta-D-ribosyl)imidazole-4-carboxamide + L-glutamate + H(+). The protein operates within amino-acid biosynthesis; L-histidine biosynthesis; L-histidine from 5-phospho-alpha-D-ribose 1-diphosphate: step 5/9. Its function is as follows. IGPS catalyzes the conversion of PRFAR and glutamine to IGP, AICAR and glutamate. The HisF subunit catalyzes the cyclization activity that produces IGP and AICAR from PRFAR using the ammonia provided by the HisH subunit. This is Imidazole glycerol phosphate synthase subunit HisF from Staphylococcus aureus (strain MRSA252).